The chain runs to 298 residues: Ribonuclease HII (298 aa).

Residues 1 to 57 form a disordered region; that stretch reads MIREPQKSAKAASKSSAPRARSSVAKATSTKATSSKAASSKAAPSKAGADAGAAKPR. Over residues 8–55 the composition is skewed to low complexity; it reads SAKAASKSSAPRARSSVAKATSTKATSSKAASSKAAPSKAGADAGAAK. The RNase H type-2 domain maps to 85–273; that stretch reads WPVAGCDEAG…VAAAWRKIEG (189 aa). Residues aspartate 91, glutamate 92, and aspartate 182 each coordinate a divalent metal cation.

This sequence belongs to the RNase HII family. Requires Mn(2+) as cofactor. Mg(2+) serves as cofactor.

It is found in the cytoplasm. It carries out the reaction Endonucleolytic cleavage to 5'-phosphomonoester.. Its function is as follows. Endonuclease that specifically degrades the RNA of RNA-DNA hybrids. This chain is Ribonuclease HII, found in Rhodopseudomonas palustris (strain BisB5).